A 192-amino-acid chain; its full sequence is Peptidyl-tRNA hydrolase (192 aa).

Tyr-14 is a tRNA binding site. Residue His-19 is the Proton acceptor of the active site. 3 residues coordinate tRNA: Tyr-61, Asn-63, and Asn-107.

Belongs to the PTH family. Monomer.

The protein resides in the cytoplasm. It carries out the reaction an N-acyl-L-alpha-aminoacyl-tRNA + H2O = an N-acyl-L-amino acid + a tRNA + H(+). In terms of biological role, hydrolyzes ribosome-free peptidyl-tRNAs (with 1 or more amino acids incorporated), which drop off the ribosome during protein synthesis, or as a result of ribosome stalling. Catalyzes the release of premature peptidyl moieties from peptidyl-tRNA molecules trapped in stalled 50S ribosomal subunits, and thus maintains levels of free tRNAs and 50S ribosomes. The sequence is that of Peptidyl-tRNA hydrolase from Wolinella succinogenes (strain ATCC 29543 / DSM 1740 / CCUG 13145 / JCM 31913 / LMG 7466 / NCTC 11488 / FDC 602W) (Vibrio succinogenes).